Reading from the N-terminus, the 131-residue chain is Peptidyl-prolyl cis-trans isomerase NIMA-interacting 4 (131 aa).

Residues 1-25 (MPPKGKSGSGKGGKGGAASGSDSAD) form a necessary for nuclear localization and DNA-binding region. The interval 1–39 (MPPKGKSGSGKGGKGGAASGSDSADKKSQGPKGGGNAVK) is disordered. The necessary for association with the pre-rRNP complexes stretch occupies residues 1 to 41 (MPPKGKSGSGKGGKGGAASGSDSADKKSQGPKGGGNAVKVR). Over residues 7–18 (SGSGKGGKGGAA) the composition is skewed to gly residues. Residue S19 is modified to Phosphoserine; by CK2. The PpiC domain maps to 35–129 (GNAVKVRHIL…FGYHIIMVEG (95 aa)).

It belongs to the PpiC/parvulin rotamase family. PIN4 subfamily. Found in pre-ribosomal ribonucleoprotein (pre-rRNP) complexes. Post-translationally, phosphorylated. Phosphorylation occurs both in the nucleus and the cytoplasm. Phosphorylation at Ser-19 does not affect its PPIase activity but is required for nuclear localization, and the dephosphorylation is a prerequisite for the binding to DNA. The unphosphorylated form associates with the pre-rRNP complexes in the nucleus.

It localises to the nucleus. The protein resides in the nucleolus. Its subcellular location is the cytoplasm. The protein localises to the cytoskeleton. It is found in the spindle. It carries out the reaction [protein]-peptidylproline (omega=180) = [protein]-peptidylproline (omega=0). Functionally, involved as a ribosomal RNA processing factor in ribosome biogenesis. Binds to tightly bent AT-rich stretches of double-stranded DNA. This chain is Peptidyl-prolyl cis-trans isomerase NIMA-interacting 4 (Pin4), found in Mus musculus (Mouse).